Here is a 335-residue protein sequence, read N- to C-terminus: UPF0353 protein Mflv_3659 (335 aa).

2 helical membrane-spanning segments follow: residues 18-38 (WFFL…VVQL) and 67-87 (LPAV…AGPT). In terms of domain architecture, VWFA spans 98-294 (VVMLVIDVSQ…EQLKQVFTNL (197 aa)). Residues 309-329 (VGWLRLGAGVLALAALGALLI) form a helical membrane-spanning segment.

It belongs to the UPF0353 family.

It is found in the cell membrane. This chain is UPF0353 protein Mflv_3659, found in Mycolicibacterium gilvum (strain PYR-GCK) (Mycobacterium gilvum (strain PYR-GCK)).